Reading from the N-terminus, the 841-residue chain is Serine/threonine-protein kinase/endoribonuclease IRE1a (841 aa).

An N-terminal signal peptide occupies residues 1–30; the sequence is MPPRCPFLRHLFFLLLLLSPWIMSPCGGAA. Residues 31-323 lie on the Lumenal side of the membrane; sequence DDVTYPIVPS…KQKYTYLFGQ (293 aa). Asparagine 100, asparagine 104, asparagine 119, asparagine 132, and asparagine 221 each carry an N-linked (GlcNAc...) asparagine glycan. A helical transmembrane segment spans residues 324–344; the sequence is WSPVKLLAPLVLLGVVVSVFI. Over 345-841 the chain is Cytoplasmic; it reads KKFSSRGSDV…FRKYFKCDII (497 aa). Residues 352-382 form a disordered region; the sequence is SDVSLKAGPSKKKKNRKSAKDTNRQSVPRGQ. The Protein kinase domain maps to 414–704; that stretch reads FLSSKEIAKG…ATEVLLHPMF (291 aa). Residues 420–428 and lysine 442 each bind ATP; that span reads IAKGSNGTV. Aspartate 570 serves as the catalytic Proton acceptor. Residues 707–838 form the KEN domain; the sequence is SEMRLSFLRD…EEVFRKYFKC (132 aa).

This sequence belongs to the protein kinase superfamily. Ser/Thr protein kinase family. In terms of assembly, homodimer; disulfide-linked. Dimer formation is driven by hydrophobic interactions within the N-terminal luminal domains and stabilized by disulfide bridges. The cofactor is Mg(2+). In terms of processing, autophosphorylated. Ubiquitous. Detected in the vascular bundles of young plants, leaves, roots, seedlings and in the receptacles of flowers and vascular bundles of the petals.

Its subcellular location is the endoplasmic reticulum membrane. The enzyme catalyses L-seryl-[protein] + ATP = O-phospho-L-seryl-[protein] + ADP + H(+). It catalyses the reaction L-threonyl-[protein] + ATP = O-phospho-L-threonyl-[protein] + ADP + H(+). Its activity is regulated as follows. The kinase domain is activated by trans-autophosphorylation. Kinase activity is required for activation of the endoribonuclease domain. Senses unfolded proteins in the lumen of the endoplasmic reticulum via its N-terminal domain which leads to enzyme auto-activation. The active endoribonuclease domain splices bZIP60 mRNA to generate a new C-terminus, converting it into a potent unfolded-protein response transcriptional activator which then induces transcription of UPR target genes. Involved in organ growth regulation. Plays a role in plant immunity and abiotic stress responses. This is Serine/threonine-protein kinase/endoribonuclease IRE1a (IRE1A) from Arabidopsis thaliana (Mouse-ear cress).